We begin with the raw amino-acid sequence, 557 residues long: Glutamine--tRNA ligase (557 aa).

The short motif at 42–52 (PEPNGYLHIGH) is the 'HIGH' region element. ATP-binding positions include 43–45 (EPN) and 49–55 (HIGHAKS). L-glutamine-binding residues include aspartate 75 and tyrosine 220. ATP is bound by residues threonine 239 and 270–271 (RL). Positions 277 to 281 (LTSKR) match the 'KMSKS' region motif.

It belongs to the class-I aminoacyl-tRNA synthetase family. Monomer.

It is found in the cytoplasm. The enzyme catalyses tRNA(Gln) + L-glutamine + ATP = L-glutaminyl-tRNA(Gln) + AMP + diphosphate. The chain is Glutamine--tRNA ligase from Haemophilus influenzae (strain 86-028NP).